The sequence spans 882 residues: Translation initiation factor IF-2 (882 aa).

Disordered regions lie at residues 95–176 (PSVT…ASSL) and 229–289 (EHAR…SALQ). Over residues 116–133 (TKNTFSQESLNKTSPQKS) the composition is skewed to polar residues. Composition is skewed to basic and acidic residues over residues 137 to 172 (KAIE…REAE) and 229 to 246 (EHAR…EGDR). Positions 247–262 (RSRHRGTKTTKQKKTN) are enriched in basic residues. A compositionally biased stretch (basic and acidic residues) spans 263-276 (KLSESKTDREEARA). Positions 382 to 551 (HRAPVVTIMG…LLQAEVLELK (170 aa)) constitute a tr-type G domain. A G1 region spans residues 391-398 (GHVDHGKT). 391-398 (GHVDHGKT) contributes to the GTP binding site. Residues 416–420 (GITQH) are G2. A G3 region spans residues 437–440 (DTPG). GTP contacts are provided by residues 437–441 (DTPGH) and 491–494 (NKID). The segment at 491–494 (NKID) is G4. Positions 527–529 (SAK) are G5.

Belongs to the TRAFAC class translation factor GTPase superfamily. Classic translation factor GTPase family. IF-2 subfamily.

It localises to the cytoplasm. One of the essential components for the initiation of protein synthesis. Protects formylmethionyl-tRNA from spontaneous hydrolysis and promotes its binding to the 30S ribosomal subunits. Also involved in the hydrolysis of GTP during the formation of the 70S ribosomal complex. This is Translation initiation factor IF-2 from Hamiltonella defensa subsp. Acyrthosiphon pisum (strain 5AT).